Consider the following 120-residue polypeptide: Alpha-amylase inhibitor Haim-2 (120 aa).

A signal peptide spans 1-32 (MKRYVCSTFVACVMVLCVIPASGAAAHEAVAE). 2 disulfide bridges follow: Cys43-Cys59 and Cys77-Cys104.

Inhibits mammalian alpha-amylases specifically but has no action on plant and microbial alpha-amylases. This chain is Alpha-amylase inhibitor Haim-2, found in Streptomyces griseosporeus.